A 151-amino-acid chain; its full sequence is DNA-directed RNA polymerase RPB6 homolog (151 aa).

Over residues 20–44 (ETEEENFVDSEEESEDKSEDKDEIV) the composition is skewed to acidic residues. The tract at residues 20-46 (ETEEENFVDSEEESEDKSEDKDEIVES) is disordered.

This sequence belongs to the archaeal RpoK/eukaryotic RPB6 RNA polymerase subunit family. As to quaternary structure, part of the viral DNA-directed RNA polymerase that consists of 8 polII-like subunits (RPB1, RPB2, RPB3, RPB5, RPB6, RPB7, RPB9, RPB10), a capping enzyme and a termination factor.

It localises to the host cytoplasm. The protein resides in the virion. Functionally, component of the DNA-directed RNA polymerase (RNAP) that catalyzes the transcription in the cytoplasm of viral DNA into RNA using the four ribonucleoside triphosphates as substrates. This African swine fever virus (isolate Tick/Malawi/Lil 20-1/1983) (ASFV) protein is DNA-directed RNA polymerase RPB6 homolog.